The sequence spans 947 residues: DEAD-box ATP-dependent RNA helicase 45 (947 aa).

A compositionally biased stretch (acidic residues) spans 1 to 14 (MEEEEVVVVVDEEE). Disordered regions lie at residues 1 to 132 (MEEE…EDEI) and 159 to 221 (SMPA…EEFM). Composition is skewed to basic and acidic residues over residues 15 to 31 (SERR…KRLD) and 42 to 61 (KEWQ…REQE). Residues 62-82 (AAAGAGTPAAAAGADGDSNAG) show a composition bias toward low complexity. Acidic residues-rich tracts occupy residues 88–108 (DGEE…EDDG) and 196–219 (DDSD…DDEE). Residues 285 to 313 (KTWVQSGLTSKLLDTIKKLGFEKPMPIQA) carry the Q motif motif. The Helicase ATP-binding domain occupies 316–494 (LPIIMSGRDC…RKVLTKPVEI (179 aa)). Residue 329–336 (AKTGSGKT) coordinates ATP. Residues 442 to 445 (DEAD) carry the DEAD box motif. Residues 479 to 647 (QVEILARKVL…AVPQDLKGLA (169 aa)) form the Helicase C-terminal domain. Residues 658–710 (TEQAHGTGYGGSGFKFNEEEDEARRSAKKAQAREYGYEEDKSDSDSDEEGGVR) form a disordered region. Over residues 697–706 (DKSDSDSDEE) the composition is skewed to acidic residues. The stretch at 854–879 (TELSVKKAKSELKRVLEDCANHALNL) forms a coiled coil.

It belongs to the DEAD box helicase family. DDX46/PRP5 subfamily.

The enzyme catalyses ATP + H2O = ADP + phosphate + H(+). In Oryza sativa subsp. japonica (Rice), this protein is DEAD-box ATP-dependent RNA helicase 45.